A 55-amino-acid chain; its full sequence is Large ribosomal subunit protein bL32c (55 aa).

Belongs to the bacterial ribosomal protein bL32 family.

It localises to the plastid. Its subcellular location is the chloroplast. The chain is Large ribosomal subunit protein bL32c from Daucus carota (Wild carrot).